Here is a 158-residue protein sequence, read N- to C-terminus: U-limacoditoxin(8)-Dv66 (158 aa).

The N-terminal stretch at 1–24 is a signal peptide; that stretch reads MALRAPWIALCCVLAVLFVVPAAT. Positions 25–32 are excised as a propeptide; sequence RDEERQKR. 2 consecutive repeat copies span residues 33–78 and 79–124. The segment at 33–158 is 3 X 46 AA tandem repeats; sequence GVDFGLQRGF…AQDPHGPGRK (126 aa). P63 carries the post-translational modification Proline amide. Positions 64–78 are excised as a propeptide; it reads GRKRRDAYEMERQKR. The segment at 101-120 is disordered; the sequence is ARAQDPHGPGRKRRDAYEME. Residue P109 is modified to Proline amide. Positions 110–124 are excised as a propeptide; the sequence is GRKRRDAYEMERQKR. The 3; half-length repeat unit spans residues 125-158; it reads GVDFGLQRGFSGSELAKLKLALARAQDPHGPGRK. At P155 the chain carries Proline amide.

It belongs to the diuretic hormone class 2 family. As to expression, expressed by the venom secretory cell of the spine. The spine is a cuticular structure containing a single large nucleated venom-secreting cell at its base. It is an independent unit capable of producing, storing and injecting venom. On the back of D.vulnerans caterpillars, spines are grouped together by 50 to 100 to form scoli, of which there are eight in D.vulnerans.

It localises to the secreted. Its function is as follows. Probable toxin. Does not show insecticidal, antimicrobial and antiparasitic activities. Does not induce increase in intracellular calcium in mouse DRG neurons, suggesting that it does not induce pain. The sequence is that of U-limacoditoxin(8)-Dv66 from Doratifera vulnerans (Mottled cup moth).